The following is an 85-amino-acid chain: Exodeoxyribonuclease 7 small subunit (85 aa).

The disordered stretch occupies residues 66 to 85 (SGEGEEVPLDTPDAEDGDGE). Positions 68-85 (EGEEVPLDTPDAEDGDGE) are enriched in acidic residues.

This sequence belongs to the XseB family. Heterooligomer composed of large and small subunits.

The protein localises to the cytoplasm. The catalysed reaction is Exonucleolytic cleavage in either 5'- to 3'- or 3'- to 5'-direction to yield nucleoside 5'-phosphates.. Functionally, bidirectionally degrades single-stranded DNA into large acid-insoluble oligonucleotides, which are then degraded further into small acid-soluble oligonucleotides. The sequence is that of Exodeoxyribonuclease 7 small subunit from Thioalkalivibrio sulfidiphilus (strain HL-EbGR7).